The primary structure comprises 447 residues: Argininosuccinate synthase (447 aa).

Residues 17–25 (AFSGGLDTS) and A43 contribute to the ATP site. Y99 is an L-citrulline binding site. ATP is bound by residues G129 and T131. Residues T131, N135, and D136 each coordinate L-aspartate. N135 lines the L-citrulline pocket. D136 is a binding site for ATP. R139 and S192 together coordinate L-citrulline. D194 lines the ATP pocket. T201, E203, and E280 together coordinate L-citrulline.

This sequence belongs to the argininosuccinate synthase family. Type 2 subfamily. Homotetramer.

The protein resides in the cytoplasm. The enzyme catalyses L-citrulline + L-aspartate + ATP = 2-(N(omega)-L-arginino)succinate + AMP + diphosphate + H(+). Its pathway is amino-acid biosynthesis; L-arginine biosynthesis; L-arginine from L-ornithine and carbamoyl phosphate: step 2/3. The polypeptide is Argininosuccinate synthase (Salmonella agona (strain SL483)).